A 79-amino-acid chain; its full sequence is Sec-independent protein translocase protein TatA (79 aa).

Residues 1 to 21 (MGGISIWQLLIIALIVVLLFG) traverse the membrane as a helical segment. The tract at residues 43 to 79 (MSSEEDKKALEDTEAAKTAQTTQQATEKKPESNKEQA) is disordered. Residues 46-57 (EEDKKALEDTEA) are compositionally biased toward basic and acidic residues. The segment covering 58–67 (AKTAQTTQQA) has biased composition (low complexity). The segment covering 68-79 (TEKKPESNKEQA) has biased composition (basic and acidic residues).

This sequence belongs to the TatA/E family. As to quaternary structure, the Tat system comprises two distinct complexes: a TatABC complex, containing multiple copies of TatA, TatB and TatC subunits, and a separate TatA complex, containing only TatA subunits. Substrates initially bind to the TatABC complex, which probably triggers association of the separate TatA complex to form the active translocon.

It localises to the cell inner membrane. In terms of biological role, part of the twin-arginine translocation (Tat) system that transports large folded proteins containing a characteristic twin-arginine motif in their signal peptide across membranes. TatA could form the protein-conducting channel of the Tat system. The sequence is that of Sec-independent protein translocase protein TatA from Shewanella putrefaciens (strain CN-32 / ATCC BAA-453).